The following is a 628-amino-acid chain: ATP-dependent zinc metalloprotease FtsH (628 aa).

The Stromal segment spans residues 1-7 (MKLSWKT). Residues 8 to 28 (LLLWSLPIFVVGFFFWQGFLG) form a helical membrane-spanning segment. Residues 29 to 118 (PTTTDVGSNI…AHPPKSTSAV (90 aa)) lie on the Lumenal side of the membrane. Residues 119-139 (WGLLGNLLFPLILVGGLAFLF) form a helical membrane-spanning segment. Topologically, residues 140-628 (RRSNNASGGP…PEKNYYISQF (489 aa)) are stromal. Residue 213–220 (GPPGTGKT) coordinates ATP. H434 is a binding site for Zn(2+). Residue E435 is part of the active site. H438 and D512 together coordinate Zn(2+).

In the central section; belongs to the AAA ATPase family. The protein in the C-terminal section; belongs to the peptidase M41 family. Homohexamer. Zn(2+) is required as a cofactor.

It localises to the plastid. The protein localises to the chloroplast thylakoid membrane. Acts as a processive, ATP-dependent zinc metallopeptidase. The chain is ATP-dependent zinc metalloprotease FtsH from Porphyra purpurea (Red seaweed).